We begin with the raw amino-acid sequence, 672 residues long: Methionine--tRNA ligase (672 aa).

Residues 12 to 22 carry the 'HIGH' region motif; that stretch reads AYTNGPLHLGH. Positions 144, 147, 156, and 159 each coordinate Zn(2+). The short motif at 330 to 334 is the 'KMSKS' region element; the sequence is KMSTS. Residue Thr333 participates in ATP binding. The tRNA-binding domain occupies 573–672; sequence DFAKIELKVA…KDLPVGSTIC (100 aa).

This sequence belongs to the class-I aminoacyl-tRNA synthetase family. MetG type 1 subfamily. As to quaternary structure, homodimer. It depends on Zn(2+) as a cofactor.

The protein localises to the cytoplasm. The catalysed reaction is tRNA(Met) + L-methionine + ATP = L-methionyl-tRNA(Met) + AMP + diphosphate. In terms of biological role, is required not only for elongation of protein synthesis but also for the initiation of all mRNA translation through initiator tRNA(fMet) aminoacylation. In Methanococcus aeolicus (strain ATCC BAA-1280 / DSM 17508 / OCM 812 / Nankai-3), this protein is Methionine--tRNA ligase.